Consider the following 401-residue polypeptide: Glyceraldehyde-3-phosphate dehydrogenase A, chloroplastic (401 aa).

The N-terminal 65 residues, 1-65, are a transit peptide targeting the chloroplast; sequence MASNMLSIAN…RSSQNGVVEA (65 aa). Residues 76–77, Asp100, and Arg145 each bind NADP(+); that span reads RI. D-glyceraldehyde 3-phosphate-binding positions include 217–219, Thr248, Arg263, 276–277, and Arg299; these read SCT and TG. Cys218 serves as the catalytic Nucleophile. Asn381 contacts NADP(+).

The protein belongs to the glyceraldehyde-3-phosphate dehydrogenase family. In terms of assembly, tetramer of either four A chains (GAPDH 2) or two A and two B chains (GAPDH 1).

It is found in the plastid. It localises to the chloroplast. The catalysed reaction is D-glyceraldehyde 3-phosphate + phosphate + NADP(+) = (2R)-3-phospho-glyceroyl phosphate + NADPH + H(+). Its pathway is carbohydrate biosynthesis; Calvin cycle. This is Glyceraldehyde-3-phosphate dehydrogenase A, chloroplastic (GAPA) from Spinacia oleracea (Spinach).